The chain runs to 24 residues: Brevinin-1Sb (24 aa).

Cysteines 18 and 24 form a disulfide.

In terms of tissue distribution, expressed by the skin glands.

Its subcellular location is the secreted. In terms of biological role, antibacterial activity against Gram-negative bacterium E.coli. The polypeptide is Brevinin-1Sb (Lithobates sphenocephalus (Southern leopard frog)).